Consider the following 458-residue polypeptide: Argininosuccinate lyase (458 aa).

This sequence belongs to the lyase 1 family. Argininosuccinate lyase subfamily.

It localises to the cytoplasm. It carries out the reaction 2-(N(omega)-L-arginino)succinate = fumarate + L-arginine. The protein operates within amino-acid biosynthesis; L-arginine biosynthesis; L-arginine from L-ornithine and carbamoyl phosphate: step 3/3. The chain is Argininosuccinate lyase from Neisseria meningitidis serogroup C (strain 053442).